The following is a 344-amino-acid chain: MEEDMYVDIFLDPYTFQDDFPPATSQLFSPGAPLDVHPLNPSNPETVFHSHLGAVKKAPSDFSSVDLSFLPDELTQENKDRTVTGNKVTNEESFRTQDWQSQLQLPDEQGSGLNLNSNSSPDTQSCLCSHDADSNQLSSETPNSNALPVVLISSMTPMNPVTECSGIVPQLQNVVSTANLACKLDLRKIALNAKNTEYNPKRFAAVIMRIREPRTTALIFSSGKVVCTGAKSEDESRLAARKYARVVQKLGFPVRFFNFKIQNMVASCDVKFPIRLEILALTHRQFSSYEPELFPGLIYKMVKPQVVLLIFASGKVVLTGAKERSEIYEAFENMYPILESFKKV.

The interval 78–143 is disordered; it reads NKDRTVTGNK…SNQLSSETPN (66 aa). Over residues 110–120 the composition is skewed to low complexity; sequence GSGLNLNSNSS. Residues 134–143 show a composition bias toward polar residues; the sequence is SNQLSSETPN.

This sequence belongs to the TBP family. In terms of assembly, interacts with TAF3.

It is found in the cytoplasm. Its subcellular location is the nucleus. Transcription factor required in complex with TAF3 for the differentiation of myoblasts into myocytes. The complex replaces TFIID at specific promoters at an early stage in the differentiation process. This Rattus norvegicus (Rat) protein is TATA box-binding protein-like 2.